A 110-amino-acid chain; its full sequence is Protein YcgL (110 aa).

Residues 14-98 (MFCVIYRSSK…PPEDLLKQHL (85 aa)) form the YcgL domain. Positions 87 to 110 (PPPPEDLLKQHLSSVGQNTSPADR) are disordered. Positions 97 to 110 (HLSSVGQNTSPADR) are enriched in polar residues.

The sequence is that of Protein YcgL from Salmonella choleraesuis (strain SC-B67).